Here is a 259-residue protein sequence, read N- to C-terminus: Exosome complex component Rrp42 (259 aa).

This sequence belongs to the RNase PH family. Rrp42 subfamily. As to quaternary structure, component of the archaeal exosome complex. Forms a hexameric ring-like arrangement composed of 3 Rrp41-Rrp42 heterodimers. The hexameric ring associates with a trimer of Rrp4 and/or Csl4 subunits.

It is found in the cytoplasm. In terms of biological role, non-catalytic component of the exosome, which is a complex involved in RNA degradation. Contributes to the structuring of the Rrp41 active site. This is Exosome complex component Rrp42 from Archaeoglobus fulgidus (strain ATCC 49558 / DSM 4304 / JCM 9628 / NBRC 100126 / VC-16).